The chain runs to 336 residues: 3-hydroxyisobutyrate dehydrogenase, mitochondrial (336 aa).

The transit peptide at 1–36 (MAASLRLRGAASGLRYWSRRQPPAVASLAAVCSRSM) directs the protein to the mitochondrion. 40–69 (TPVGFIGVGNMGNPMAKNLMKHGYPLIIYD) contributes to the NAD(+) binding site. An N6-acetyllysine; alternate mark is found at lysine 60 and lysine 76. Residues lysine 60 and lysine 76 each carry the N6-succinyllysine; alternate modification. An N6-succinyllysine modification is found at lysine 95. NAD(+) is bound by residues 103-104 (LP) and asparagine 108. N6-acetyllysine is present on lysine 121. Threonine 134 contributes to the NAD(+) binding site. An N6-succinyllysine modification is found at lysine 141. Position 145 is an N6-acetyllysine (lysine 145). Lysine 149 bears the N6-acetyllysine; alternate mark. Lysine 149 carries the post-translational modification N6-succinyllysine; alternate. Lysine 209 is a catalytic residue. Residues lysine 238 and lysine 242 each carry the N6-acetyllysine; alternate modification. Residues lysine 238 and lysine 242 each carry the N6-succinyllysine; alternate modification. Lysine 284 contacts NAD(+). Lysine 297 is modified (N6-succinyllysine). Residue lysine 321 is modified to N6-acetyllysine; alternate. N6-succinyllysine; alternate is present on lysine 321.

This sequence belongs to the HIBADH-related family. 3-hydroxyisobutyrate dehydrogenase subfamily. Homodimer.

It localises to the mitochondrion. The catalysed reaction is 3-hydroxy-2-methylpropanoate + NAD(+) = 2-methyl-3-oxopropanoate + NADH + H(+). It functions in the pathway amino-acid degradation; L-valine degradation. This Bos taurus (Bovine) protein is 3-hydroxyisobutyrate dehydrogenase, mitochondrial (HIBADH).